Consider the following 175-residue polypeptide: Endothelin-2 (175 aa).

The N-terminal stretch at 1–21 (MVSAWCSIALALLLALHEGKG) is a signal peptide. Residues 22–43 (QAAATLEQPASAPKGRGPHLRF) constitute a propeptide that is removed on maturation. 2 cysteine pairs are disulfide-bonded: Cys46-Cys60 and Cys48-Cys56. The propeptide occupies 67–175 (VNTAGQTAPY…IPAYSRWRKR (109 aa)). The interval 93–108 (CECSTAGDSACATFCH) is endothelin-like.

It belongs to the endothelin/sarafotoxin family.

Its subcellular location is the secreted. In terms of biological role, vasoconstrictor. The chain is Endothelin-2 (Edn2) from Mus musculus (Mouse).